We begin with the raw amino-acid sequence, 329 residues long: MKIAIDAMGGDHAPKEIVLGAMKAVQHFSDVHITLFGDEGKIRPYLTSDERITVIHTNEVIEATDEPVRAVRRKKQSSMVLMAEEVKEGRADACISAGNTGALMAAGLFVVGRIAGIDRPALAPTLPTIGGEGFLFLDVGANVDARPEHLLQYALMGAVYAEKVRGIPRPRIGLLNVGTEDQKGNDVAKKAFQLLRETDLNFIGNVEARDLLHGVADVVVTDGFTGNVALKTIEGTAISVFSMLKEALTSSFLSKLAAAILKPKLIDLKKTMDYSEYGGAALFGLNAPVVKAHGSSDANAIFHAVRQAREMVANDIITTIKEAIEQNHS.

This sequence belongs to the PlsX family. As to quaternary structure, homodimer. Probably interacts with PlsY.

Its subcellular location is the cytoplasm. It catalyses the reaction a fatty acyl-[ACP] + phosphate = an acyl phosphate + holo-[ACP]. It functions in the pathway lipid metabolism; phospholipid metabolism. Functionally, catalyzes the reversible formation of acyl-phosphate (acyl-PO(4)) from acyl-[acyl-carrier-protein] (acyl-ACP). This enzyme utilizes acyl-ACP as fatty acyl donor, but not acyl-CoA. The sequence is that of Phosphate acyltransferase from Geobacillus sp. (strain WCH70).